The following is a 123-amino-acid chain: Neuropeptide-like peptides nlp-40 (123 aa).

The first 17 residues, 1–17, serve as a signal peptide directing secretion; sequence MKLVILLSFVATVAVFA. 3 propeptides span residues 30 to 31, 66 to 67, and 75 to 76; these read RA and KR.

In terms of tissue distribution, expressed in intestinal cells.

Its subcellular location is the secreted. It localises to the cytoplasmic vesicle. Its function is as follows. Neuropeptide ligand for the G-protein coupled receptor aex-2. Activates and regulates the rhythmic calcium influx in DVB GABergic neurons during the defecation motor program, which is a coordinated series of three muscle contractions that occurs every 45 seconds. This chain is Neuropeptide-like peptides nlp-40, found in Caenorhabditis elegans.